The primary structure comprises 107 residues: Proteinase inhibitor 1 (107 aa).

Residues 1 to 23 (MELKFAHIIVFFLLATSFETLMA) form the signal peptide. The propeptide occupies 24–36 (RKESDGPEVIQLL).

This sequence belongs to the protease inhibitor I13 (potato type I serine protease inhibitor) family.

In Solanum tuberosum (Potato), this protein is Proteinase inhibitor 1.